Reading from the N-terminus, the 1198-residue chain is Chromosome partition protein Smc (1198 aa).

Residue 40–47 (PNGSGKSN) coordinates ATP. Coiled coils occupy residues 175-211 (ITKY…GQLG) and 322-524 (LGEQ…LAKK). Positions 534-647 (CGTLADLLQV…VTDMEAATRV (114 aa)) constitute an SMC hinge domain. Positions 687–1042 (SREIQELRQE…AELDKTMSER (356 aa)) form a coiled coil. The interval 785 to 818 (AEEQSKLTDSIQEAQEALARQEEKNRQASREMEQ) is disordered. Residues 803–818 (ARQEEKNRQASREMEQ) are compositionally biased toward basic and acidic residues.

This sequence belongs to the SMC family. Homodimer.

It is found in the cytoplasm. Required for chromosome condensation and partitioning. This Desulfitobacterium hafniense (strain Y51) protein is Chromosome partition protein Smc.